Here is a 555-residue protein sequence, read N- to C-terminus: MERYEVLEQIGKGSFGSALLVRHKQERKKYVLKKIRLARQSDRARRSAHQEMELISTVRNPFVVEYKDSWVEKGCYVCIVIGYCQGGDMTDTIKRACGVHFPEEKLCQWLVQLLMALDYLHSNHILHRDVKCSNIFLTKEQDIRLGDFGLAKILTSDDLTSSVVGTPSYMCPELLADIPYGSKSDIWSLGCCMYEMAAHKPPFKASDVQTLITKIHKLIMDPIPAMYSGSFRGLIKSMLRKNPELRPSANELLNHPHLQPYISMVYMKLESPRRSTFPLQFSERDATLKERRRSSFSNDRRLNPSVSDTEAGSVSSSGKASPTPMFNGRKVSEVTVGVVREEIVPQRQEEAKKQSGAARTPRVAGTSAKASTQRTVFKHELMKVSNPTERRRRVSLPLVVENPYTYESDITALCSLNSPDVSVNTPRFDKIAEFPEDIFQNQNRETASRREVARHSFSSPPCPPHGEDNSNGSITKDKCTVQKRSVSEVKQRRFDTSSYQQRAEALEGLLEFSAKLLQQERYDELGVLLKPFGAERVSSRETAIWLTKSFKEASV.

The Protein kinase domain maps to 4–258 (YEVLEQIGKG…ANELLNHPHL (255 aa)). Residues 10 to 18 (IGKGSFGSA) and K33 contribute to the ATP site. The Proton acceptor role is filled by D129. Disordered regions lie at residues 288–328 (LKER…MFNG), 346–372 (QRQEEAKKQSGAARTPRVAGTSAKAST), and 443–477 (NRETASRREVARHSFSSPPCPPHGEDNSNGSITKD). Polar residues predominate over residues 304–320 (PSVSDTEAGSVSSSGKA).

It belongs to the protein kinase superfamily. NEK Ser/Thr protein kinase family. NIMA subfamily.

The enzyme catalyses L-seryl-[protein] + ATP = O-phospho-L-seryl-[protein] + ADP + H(+). It carries out the reaction L-threonyl-[protein] + ATP = O-phospho-L-threonyl-[protein] + ADP + H(+). In terms of biological role, may be involved in plant development processes. This is Serine/threonine-protein kinase Nek4 (NEK4) from Arabidopsis thaliana (Mouse-ear cress).